A 140-amino-acid polypeptide reads, in one-letter code: Protein NrdI (140 aa).

Belongs to the NrdI family.

In terms of biological role, probably involved in ribonucleotide reductase function. The chain is Protein NrdI from Photorhabdus laumondii subsp. laumondii (strain DSM 15139 / CIP 105565 / TT01) (Photorhabdus luminescens subsp. laumondii).